The following is a 92-amino-acid chain: Small ribosomal subunit protein uS19c (92 aa).

This sequence belongs to the universal ribosomal protein uS19 family.

It is found in the plastid. The protein resides in the chloroplast. Functionally, protein S19 forms a complex with S13 that binds strongly to the 16S ribosomal RNA. This is Small ribosomal subunit protein uS19c from Nephroselmis olivacea (Green alga).